We begin with the raw amino-acid sequence, 1167 residues long: MNNNYYGSPLSPEELQHQMHQHQQQQQQQQQQQQQQQQQQQQQQQQQQQQHQHQQQQKTNQHRNAGMMNTPPTTNQGNSTIHASDVTMSGGSDSLDEIIQQNLDEMHRRRSVPQPYGGQTRRLSMFDYANPNDGFSDYQLDNMSGNYGDMTGGMGMSGHSSPYAGQNIMAMSDHSGGYSHMSPNVMGNMMTYPNLNMYHSPPIENPYSSAGLDTIRTDFSMDMNMDSGSVSAASVHPTPGLNKQDDEMMTMEQGFGGGDDANASHQAQQNMGGLTPAMTPAMTPAMTPGVSNFAQGMATPVSQDAASTPATTFQSPSLSATTQTIRIGPPPPPSVTNAPTPAPFTSTPSGGGASQTKSIYSKSGFDMLRALWYVASRKDPKLKLGAVDMSCAFVVCDVTLNDCPIIYVSDNFQNLTGYSRHEIVGRNCRFLQAPDGNVEAGTKREFVENNAVYTLKKTIAEGQEIQQSLINYRKGGKPFLNLLTMIPIPWDTEEIRYFIGFQIDLVECPDAIIGQEGNGPMQVNYTHSDIGQYIWTPPTQKQLEPADGQTLGVDDVSTLLQQCNSKGVASDWHKQSWDKMLLENADDVVHVLSLKGLFLYLSPACKKVLEYDASDLVGTSLSSICHPSDIVPVTRELKEAQQHTPVNIVFRIRRKNSGYTWFESHGTLFNEQGKGRKCIILVGRKRPVFALHRKDLELNGGIGDSEIWTKVSTSGMFLFVSSNVRSLLDLLPENLQGTSMQDLMRKESRAEFGRTIEKARKGKIASCKHEVQNKRGQVLQAYTTFYPGDGGEGQRPTFLLAQTKLLKASSRTLAPATVTVKNMSPGGVPLSPMKGIQTDSDSNTLMGGMSKSGSSDSTGAMVSARSSAGPGQDAALDADNIFDELKTTRCTSWQYELRQMEKVNRMLAEELAQLLSNKKKRKRRKGGGNMVRDCANCHTRNTPEWRRGPSGNRDLCNSCGLRWAKQTGRVSPRTSSRGGNGDSMSKKSNSPSHSSPLHREVGNDSPSTTTATKNSPSLRGSSTTAPGTITTDSGPAVASSASGTGSTTIATSANSAASTVNALGPPATGPSGGSPAQHLPPHLQGTHLNAQAMQRVHQHKQHQQHQQQHQQQHQQQHQQQHQQLQQHQFNPPQSQPLLEGGSGFRGSGMEMTSIREEMGEHQQGLSV.

2 disordered regions span residues 1–91 and 307–355; these read MNNN…MSGG and STPA…GASQ. Residues 21–57 show a composition bias toward low complexity; that stretch reads QHQQQQQQQQQQQQQQQQQQQQQQQQQQQQHQHQQQQ. Polar residues-rich tracts occupy residues 70–91 and 307–325; these read TPPTTNQGNSTIHASDVTMSGG and STPATTFQSPSLSATTQTI. Over residues 335 to 348 the composition is skewed to low complexity; the sequence is VTNAPTPAPFTSTP. The region spanning 381–452 is the PAS 1 domain; sequence KLKLGAVDMS…KREFVENNAV (72 aa). C428 is subject to S-4a-FMN cysteine. The 40-residue stretch at 469-508 folds into the PAC 1 domain; that stretch reads LINYRKGGKPFLNLLTMIPIPWDTEEIRYFIGFQIDLVEC. A PAS 2 domain is found at 574 to 644; that stretch reads KQSWDKMLLE…RELKEAQQHT (71 aa). The region spanning 650–691 is the PAC 2 domain; sequence FRIRRKNSGYTWFESHGTLFNEQGKGRKCIILVGRKRPVFAL. In terms of domain architecture, PAS 3 spans 693–763; that stretch reads RKDLELNGGI…RTIEKARKGK (71 aa). Over residues 849–861 the composition is skewed to low complexity; it reads MSKSGSSDSTGAM. Disordered regions lie at residues 849-872, 918-952, 966-1047, and 1060-1167; these read MSKSGSSDSTGAMVSARSSAGPGQ, KKKRKRRKGGGNMVRDCANCHTRNTPEWRRGPSGN, QTGR…TGST, and VNAL…GLSV. A GATA-type zinc finger spans residues 934-959; sequence CANCHTRNTPEWRRGPSGNRDLCNSC. Positions 968–977 are enriched in polar residues; the sequence is GRVSPRTSSR. Residues 986–995 are compositionally biased toward low complexity; that stretch reads KKSNSPSHSS. Over residues 1004-1033 the composition is skewed to polar residues; sequence DSPSTTTATKNSPSLRGSSTTAPGTITTDS. Low complexity-rich tracts occupy residues 1036–1047 and 1104–1128; these read AVASSASGTGST and QHQQQHQQQHQQQHQQQHQQLQQHQ.

In terms of assembly, heterodimer of wc-1 and wc-2. FMN binds covalently to cysteine after exposure to blue light and is reversed in the dark.

It localises to the nucleus. Its function is as follows. May function as a transcription factor involved in light regulation. Binds and affects blue light regulation of the al-3 gene. Wc-1 and wc-2 proteins interact via homologous PAS domains, bind to promoters of light regulated genes such as frq, and activate transcription. This is White collar 1 protein (wc-1) from Neurospora crassa (strain ATCC 24698 / 74-OR23-1A / CBS 708.71 / DSM 1257 / FGSC 987).